The sequence spans 583 residues: Steryl-sulfatase (583 aa).

The signal sequence occupies residues 1-21 (MPLRKMKIPFLLLFFLWEAES). Over 22–184 (HAASRPNIIL…GSVFTTGFKR (163 aa)) the chain is Lumenal. Asp-35 and Asp-36 together coordinate Ca(2+). Asn-47 carries an N-linked (GlcNAc...) asparagine glycan. Position 75 (Cys-75) interacts with Ca(2+). Cys-75 acts as the Nucleophile in catalysis. Cys-75 carries the 3-oxoalanine (Cys) modification. His-136 is a catalytic residue. 2 disulfide bridges follow: Cys-141-Cys-148 and Cys-170-Cys-242. A helical membrane pass occupies residues 185–208 (LVFLPLQIVGVTLLTLAALNCLGL). The Cytoplasmic segment spans residues 209 to 212 (LHVP). Residues 213 to 234 (LGVFFSLLFLAALILTLFLGFL) form a helical membrane-spanning segment. The Lumenal segment spans residues 235–583 (HYFRPLNCFM…REKQDKRLSR (349 aa)). Asn-259 carries N-linked (GlcNAc...) asparagine glycosylation. Positions 342 and 343 each coordinate Ca(2+). 4 cysteine pairs are disulfide-bonded: Cys-446-Cys-489, Cys-481-Cys-487, Cys-562-Cys-570, and Cys-563-Cys-572.

It belongs to the sulfatase family. As to quaternary structure, homodimer. The cofactor is Ca(2+). Post-translationally, the conversion to 3-oxoalanine (also known as C-formylglycine, FGly), of a serine or cysteine residue in prokaryotes and of a cysteine residue in eukaryotes, is critical for catalytic activity.

The protein localises to the cytoplasmic vesicle. It localises to the secretory vesicle. The protein resides in the microneme membrane. Its subcellular location is the endoplasmic reticulum membrane. It carries out the reaction dehydroepiandrosterone 3-sulfate + H2O = 3beta-hydroxyandrost-5-en-17-one + sulfate + H(+). It catalyses the reaction estrone 3-sulfate + H2O = estrone + sulfate + H(+). Functionally, catalyzes the conversion of sulfated steroid precursors, such as dehydroepiandrosterone sulfate (DHEA-S) and estrone sulfate to the free steroid. This is Steryl-sulfatase (STS) from Homo sapiens (Human).